Reading from the N-terminus, the 459-residue chain is tRNA modification GTPase MnmE (459 aa).

(6S)-5-formyl-5,6,7,8-tetrahydrofolate is bound by residues Arg-23, Glu-88, and Arg-127. In terms of domain architecture, TrmE-type G spans Gly-223–Phe-381. Asn-233 serves as a coordination point for K(+). Residues Asn-233–Ser-238, Thr-252–Thr-258, and Asp-277–Gly-280 contribute to the GTP site. Ser-237 provides a ligand contact to Mg(2+). K(+)-binding residues include Thr-252, Ile-254, and Thr-257. Thr-258 is a binding site for Mg(2+). Lys-459 contributes to the (6S)-5-formyl-5,6,7,8-tetrahydrofolate binding site.

This sequence belongs to the TRAFAC class TrmE-Era-EngA-EngB-Septin-like GTPase superfamily. TrmE GTPase family. Homodimer. Heterotetramer of two MnmE and two MnmG subunits. The cofactor is K(+).

It localises to the cytoplasm. Exhibits a very high intrinsic GTPase hydrolysis rate. Involved in the addition of a carboxymethylaminomethyl (cmnm) group at the wobble position (U34) of certain tRNAs, forming tRNA-cmnm(5)s(2)U34. The chain is tRNA modification GTPase MnmE from Clostridium kluyveri (strain ATCC 8527 / DSM 555 / NBRC 12016 / NCIMB 10680 / K1).